Here is a 564-residue protein sequence, read N- to C-terminus: Ell-associated factor Eaf (564 aa).

2 disordered regions span residues 179–255 and 270–564; these read SGPG…MITD and QANI…DDDD. Over residues 186–205 the composition is skewed to polar residues; that stretch reads ENSTMRVSSKTKVSTGSRRN. Residue S215 is modified to Phosphoserine. Residues 274–283 are compositionally biased toward low complexity; that stretch reads SGSSTGSSSG. Residues 297-309 show a composition bias toward basic residues; sequence GKQRQAHGKRQQI. Low complexity-rich tracts occupy residues 315–329, 343–387, and 409–420; these read PPVQQQPHYQQQQQP, QQQQ…QQRP, and ASQSVAQAAAVL. The span at 438 to 453 shows a compositional bias: acidic residues; that stretch reads DSSDSDSGSDSDDSTE. 3 stretches are compositionally biased toward low complexity: residues 463 to 505, 523 to 533, and 546 to 564; these read EQQQ…NQLP, QQPQPQPQQQQ, and NDLLQNDLQLSSNSSDDDD.

It belongs to the EAF family.

The protein localises to the nucleus. Its function is as follows. Promotes transcriptional elongation by Su(Tpl)/ELL. Essential for development. The chain is Ell-associated factor Eaf from Drosophila pseudoobscura pseudoobscura (Fruit fly).